The following is a 338-amino-acid chain: 2,3-dihydroxybenzoate decarboxylase (338 aa).

C251 is an active-site residue.

It belongs to the metallo-dependent hydrolases superfamily. Homotetramer.

The catalysed reaction is 2,3-dihydroxybenzoate + H(+) = catechol + CO2. Its pathway is aromatic compound metabolism; benzoate degradation via hydroxylation. In terms of biological role, has an absolute substrate specificity for 2,3-DHBA. This is 2,3-dihydroxybenzoate decarboxylase from Aspergillus oryzae (strain ATCC 42149 / RIB 40) (Yellow koji mold).